The following is a 1075-amino-acid chain: MEQTLAILKNDNSTLVAEMQNQLVHDFSPNGTALPELDIKAFVQKLGQRLCHRPYVYSAFMDVVKALHNEIVDFPGFIERISVILRDYPDLLEYLNIFLPSSYKYLLSNSGANFTLQFTTPSGPVSTPSTYVATYNDLPCTYHRAIGFVSRVRRALLSNPEQFFKLQDSLRKFKNSECSLSELQTIVTSLLAEHPSLAHEFHNFLPSSIFFGSKPPLGSFPLRGIQSSQFTLSNISDLLSQSRPDNLSPFSHLSNESSDFFKNVKNVLTDVETYHEFLKLLNLYVQGIIDRNILVSRGFGFLKSNSGLWRSFLSLTSLSPEEFLSVYNSACSDFPECGPSYRLLPVEERNISCSGRDDFAWGILNDDWVSHPTWASEESGFIVQRKTPYEEAMTKLEEERYEFDRHIEATSWTIKSLKKIQNRINELPEEERETYTLEEGLGLPSKSIYKKTIKLVYTSEHAEEMFKALERMPCLTLPLVISRLEEKNEEWKSVKRSLQPGWRSIEFKNYDKSLDSQCVYFKARDKKNVSSKFLLAEADILRSQAKLHFPLRSRSAFEFSFVYDNEIVLFDTCYMVCTYIVCNSPSGLKKVEHFFKNILPLHFGLEKDKFSIFLDQVFRGPDYDVNAPNIVGNKPVRRKRSNSITQLTEFVKQPKINGQRESRSAAAARKKEESGNKSQSNSQNSLSDESGNVTPVSKKQLSQPAAAIKASLKYPSHPDSLLEHQDHAGDTENEMHDDVDKEQFGYSSMYVFFRLFNLLYERLYELQRLEDQVSIIQQRIIPNPVSQKQKIWRDRWNDLSDVPDEKTHYENTYVMILRLIYGIVDQSAFEDYLRFYYGNKAYKIYTIDKLVWSAAKQVHHIVSDGKYKFVTSLVEQNSSASPKKNYDDFLYRLEIEKLLNPDEILFRFCWINKFKSFGIKIMKRANLIVDQSLDTQRRVWKKYVQNYRIQKLTEEISYKNYRCPFLCRNIEKERTVEQLVSRLQTKLLRSAELVSGLQAKLCLDSFKLLYLPRTEDSYIDASYLRLRDTDFLDCQNKRKQRWRNRWESLLKSVRGTSDNTAEVNFDADINALFIP.

PAH domains lie at 28 to 102 (SPNG…LPSS), 138 to 208 (LPCT…LPSS), and 243 to 319 (RPDN…TSLS). A phosphoserine mark is found at Ser-641 and Ser-643. The disordered stretch occupies residues 647–700 (LTEFVKQPKINGQRESRSAAAARKKEESGNKSQSNSQNSLSDESGNVTPVSKKQ). The span at 658-675 (GQRESRSAAAARKKEESG) shows a compositional bias: basic and acidic residues. A compositionally biased stretch (low complexity) spans 676–691 (NKSQSNSQNSLSDESG).

As to quaternary structure, heterotetramer of alp13, clr6, prw1 and pst2.

It localises to the nucleus. Has a role in chromatin assembly and chromosome segregation. Involved in the deacetylation of histones. In Schizosaccharomyces pombe (strain 972 / ATCC 24843) (Fission yeast), this protein is Paired amphipathic helix protein pst2 (pst2).